A 152-amino-acid chain; its full sequence is MGSKVVIYTDGACAGNPGPGGWGALLQFNDTSKEVFGYELDTTNNRMEITAALEALRMLKKSCNIEIYTDSKYLQQGITAWIHNWIKNNWCKSNNEPVKNADLWQKLYAELSKHTIIWKWVKGHANNSGNIAADKLAVQGRETAIEILKCRG.

The RNase H type-1 domain maps to 1–142 (MGSKVVIYTD…ADKLAVQGRE (142 aa)). The Mg(2+) site is built by Asp-10, Glu-48, Asp-70, and Asp-134.

It belongs to the RNase H family. As to quaternary structure, monomer. It depends on Mg(2+) as a cofactor.

The protein localises to the cytoplasm. The enzyme catalyses Endonucleolytic cleavage to 5'-phosphomonoester.. Functionally, endonuclease that specifically degrades the RNA of RNA-DNA hybrids. The polypeptide is Ribonuclease H (Rickettsia massiliae (strain Mtu5)).